Reading from the N-terminus, the 509-residue chain is tRNA-2-methylthio-N(6)-dimethylallyladenosine synthase (509 aa).

The span at 1-15 (MNEQQRLASQQANAS) shows a compositional bias: polar residues. The disordered stretch occupies residues 1-22 (MNEQQRLASQQANASTKKEEKD). One can recognise an MTTase N-terminal domain in the interval 66-184 (RKFYIRTYGC…LPYILKDAMF (119 aa)). Residues cysteine 75, cysteine 111, cysteine 145, cysteine 221, cysteine 225, and cysteine 228 each coordinate [4Fe-4S] cluster. The Radical SAM core domain occupies 207-437 (RRGDIKAWVN…NELVNEFSAK (231 aa)). The 64-residue stretch at 440–503 (KKYEGQIVEV…TWSLNGELVE (64 aa)) folds into the TRAM domain.

This sequence belongs to the methylthiotransferase family. MiaB subfamily. Monomer. [4Fe-4S] cluster serves as cofactor.

It is found in the cytoplasm. The enzyme catalyses N(6)-dimethylallyladenosine(37) in tRNA + (sulfur carrier)-SH + AH2 + 2 S-adenosyl-L-methionine = 2-methylsulfanyl-N(6)-dimethylallyladenosine(37) in tRNA + (sulfur carrier)-H + 5'-deoxyadenosine + L-methionine + A + S-adenosyl-L-homocysteine + 2 H(+). Catalyzes the methylthiolation of N6-(dimethylallyl)adenosine (i(6)A), leading to the formation of 2-methylthio-N6-(dimethylallyl)adenosine (ms(2)i(6)A) at position 37 in tRNAs that read codons beginning with uridine. The polypeptide is tRNA-2-methylthio-N(6)-dimethylallyladenosine synthase (Bacillus cytotoxicus (strain DSM 22905 / CIP 110041 / 391-98 / NVH 391-98)).